Here is a 538-residue protein sequence, read N- to C-terminus: Methionine--tRNA ligase (538 aa).

A 'HIGH' region motif is present at residues 21-31; sequence YYVNDAPHLGH. Zn(2+)-binding residues include C137, C140, C162, and H165. The 'KMSKS' region motif lies at 313–317; the sequence is KMSKS. Position 316 (K316) interacts with ATP.

This sequence belongs to the class-I aminoacyl-tRNA synthetase family. MetG type 2A subfamily. In terms of assembly, monomer. Zn(2+) serves as cofactor.

The protein localises to the cytoplasm. The catalysed reaction is tRNA(Met) + L-methionine + ATP = L-methionyl-tRNA(Met) + AMP + diphosphate. Its function is as follows. Is required not only for elongation of protein synthesis but also for the initiation of all mRNA translation through initiator tRNA(fMet) aminoacylation. The protein is Methionine--tRNA ligase of Streptomyces coelicolor (strain ATCC BAA-471 / A3(2) / M145).